Here is a 141-residue protein sequence, read N- to C-terminus: Nucleoside diphosphate kinase (141 aa).

Residues Lys11, Tyr59, Arg87, Thr93, Arg104, and Asn114 each coordinate ATP. Catalysis depends on His117, which acts as the Pros-phosphohistidine intermediate.

Belongs to the NDK family. In terms of assembly, homotetramer. The cofactor is Mg(2+).

The protein localises to the cytoplasm. The enzyme catalyses a 2'-deoxyribonucleoside 5'-diphosphate + ATP = a 2'-deoxyribonucleoside 5'-triphosphate + ADP. It carries out the reaction a ribonucleoside 5'-diphosphate + ATP = a ribonucleoside 5'-triphosphate + ADP. Its function is as follows. Major role in the synthesis of nucleoside triphosphates other than ATP. The ATP gamma phosphate is transferred to the NDP beta phosphate via a ping-pong mechanism, using a phosphorylated active-site intermediate. The sequence is that of Nucleoside diphosphate kinase from Orientia tsutsugamushi (strain Boryong) (Rickettsia tsutsugamushi).